A 307-amino-acid chain; its full sequence is Mitochondrial brown fat uncoupling protein 1 (307 aa).

Over 2 to 10 (VNPTTSEVH) the chain is Mitochondrial intermembrane. Residues 11–32 (PTMGVKIFSAGVAACLADIITF) traverse the membrane as a helical segment. Solcar repeat units follow at residues 11–102 (PTMG…VQEY), 111–201 (PTLG…MKGA), and 210–295 (DDVP…LKKE). Topologically, residues 33–73 (PLDTAKVRLQIQGEGQISSTIRYKGVLGTITTLAKTEGLPK) are mitochondrial matrix. Lys-56 contributes to the fatty acid 16:0 binding site. A helical membrane pass occupies residues 74-96 (LYSGLPAGIQRQISFASLRIGLY). Residues 97–116 (DTVQEYFSSGKETPPTLGNR) lie on the Mitochondrial intermembrane side of the membrane. Residues 117-133 (ISAGLMTGGVAVFIGQP) traverse the membrane as a helical segment. The Mitochondrial matrix segment spans residues 134 to 178 (TEVVKVRLQAQSHLHGIKPRYTGTYNAYRIIATTESFSTLWKGTT). Residues 179-195 (PNLLRNVIINCVELVTY) traverse the membrane as a helical segment. Residues 196–212 (DLMKGALVNNQILADDV) lie on the Mitochondrial intermembrane side of the membrane. The chain crosses the membrane as a helical span at residues 213–232 (PCHLLSAFVAGFCTTFLASP). Residues 233–266 (ADVVKTRFINSLPGQYPSVPSCAMTMLTKEGPTA) are Mitochondrial matrix-facing. Cys-254 is subject to Cysteine sulfenic acid (-SOH). The chain crosses the membrane as a helical span at residues 267 to 289 (FFKGFVPSFLRLASWNVIMFVCF). A fatty acid 16:0-binding site is contributed by Lys-269. At 290–307 (EQLKKELSKSRQTVDCTT) the chain is on the mitochondrial intermembrane side.

This sequence belongs to the mitochondrial carrier (TC 2.A.29) family. As to quaternary structure, most probably functions as a monomer. Binds one purine nucleotide per monomer. However, has also been suggested to function as a homodimer or a homotetramer. Tightly associates with cardiolipin in the mitochondrion inner membrane; may stabilize and regulate its activity. Post-translationally, may undergo sulfenylation upon cold exposure. May increase the sensitivity of UCP1 thermogenic function to the activation by noradrenaline probably through structural effects. May undergo ubiquitin-mediated proteasomal degradation. As to expression, brown adipose tissue.

The protein localises to the mitochondrion inner membrane. It catalyses the reaction H(+)(in) = H(+)(out). With respect to regulation, has no constitutive proton transporter activity and has to be activated by long-chain fatty acids/LCFAs. Inhibited by purine nucleotides. Both purine nucleotides and LCFAs bind the cytosolic side of the transporter and directly compete to activate or inhibit it. Activated by noradrenaline and reactive oxygen species. Despite lacking canonical translational encoding for selenocysteine, a small pool of the protein has been observed to selectively incorporate selenocysteine at 'Cys-254'. Selenocysteine-modified protein is highly sensitive to redox modification and may constitute a pool of protein highly sensitive to activation by elevated levels of reactive oxygen species (ROS). In terms of biological role, mitochondrial protein responsible for thermogenic respiration, a specialized capacity of brown adipose tissue and beige fat that participates in non-shivering adaptive thermogenesis to temperature and diet variations and more generally to the regulation of energy balance. Functions as a long-chain fatty acid/LCFA and proton symporter, simultaneously transporting one LCFA and one proton through the inner mitochondrial membrane. However, LCFAs remaining associated with the transporter via their hydrophobic tails, it results in an apparent transport of protons activated by LCFAs. Thereby, dissipates the mitochondrial proton gradient and converts the energy of substrate oxydation into heat instead of ATP. Regulates the production of reactive oxygen species/ROS by mitochondria. This Mesocricetus auratus (Golden hamster) protein is Mitochondrial brown fat uncoupling protein 1.